Consider the following 279-residue polypeptide: Phospholipase A and acyltransferase 5 (279 aa).

Disordered stretches follow at residues Met1–Ser53 and Gln70–Gly117. A compositionally biased stretch (polar residues) spans Leu97–Asp106. The 115-residue stretch at Leu135–Gln249 folds into the LRAT domain. Catalysis depends on residues His145 and His157. The active-site Acyl-thioester intermediate is Cys233.

This sequence belongs to the H-rev107 family. As to expression, highest expression level in testis and pancreas.

It is found in the cytoplasm. Its subcellular location is the cytosol. The enzyme catalyses a 1,2-diacyl-sn-glycero-3-phosphocholine + H2O = a 1-acyl-sn-glycero-3-phosphocholine + a fatty acid + H(+). It carries out the reaction a 1,2-diacyl-sn-glycero-3-phosphocholine + H2O = a 2-acyl-sn-glycero-3-phosphocholine + a fatty acid + H(+). The catalysed reaction is 1-hexadecanoyl-2-(5Z,8Z,11Z,14Z-eicosatetraenoyl)-sn-glycero-3-phosphocholine + 1,2-di-(9Z-octadecenoyl)-sn-glycero-3-phosphoethanolamine = N-(5Z,8Z,11Z,14Z-eicosatetraenoyl)-1,2-di-(9Z-octadecenoyl)-sn-glycero-3-phosphoethanolamine + 1-hexadecanoyl-sn-glycero-3-phosphocholine + H(+). It catalyses the reaction 1,2-di-(9Z-octadecenoyl)-sn-glycero-3-phosphoethanolamine + 1,2-dihexadecanoyl-sn-glycero-3-phosphocholine = N-hexadecanoyl-1,2-di-(9Z-octadecenoyl)-sn-glycero-3-phosphoethanolamine + 1-hexadecanoyl-sn-glycero-3-phosphocholine + H(+). The enzyme catalyses 1,2-di-(9Z-octadecenoyl)-sn-glycero-3-phosphoethanolamine + 1,2-dihexadecanoyl-sn-glycero-3-phosphocholine = N-hexadecanoyl-1,2-di-(9Z-octadecenoyl)-sn-glycero-3-phosphoethanolamine + 2-hexadecanoyl-sn-glycero-3-phosphocholine + H(+). It carries out the reaction a 1,2-diacyl-sn-glycero-3-phosphoethanolamine + a 1,2-diacyl-sn-glycero-3-phosphocholine = an N-acyl-1,2-diacyl-sn-glycero-3-phosphoethanolamine + a 1-acyl-sn-glycero-3-phosphocholine + H(+). The catalysed reaction is a 1,2-diacyl-sn-glycero-3-phosphoethanolamine + a 1,2-diacyl-sn-glycero-3-phosphocholine = an N-acyl-1,2-diacyl-sn-glycero-3-phosphoethanolamine + a 2-acyl-sn-glycero-3-phosphocholine + H(+). It catalyses the reaction 1-hexadecanoyl-2-(9Z-octadecenoyl)-sn-glycero-3-phosphocholine + 1,2-di-(9Z-octadecenoyl)-sn-glycero-3-phosphoethanolamine = N,1,2-tri-(9Z-octadecenoyl)-sn-glycero-3-phosphoethanolamine + 1-hexadecanoyl-sn-glycero-3-phosphocholine + H(+). Its function is as follows. Exhibits both phospholipase A1/2 and acyltransferase activities. Shows phospholipase A1 (PLA1) and A2 (PLA2) activity, catalyzing the calcium-independent release of fatty acids from the sn-1 or sn-2 position of glycerophospholipids. Shows N-acyltransferase activity, catalyzing the calcium-independent transfer of a fatty acyl group at the sn-1 position of phosphatidylcholine (PC) and other glycerophospholipids to the primary amine of phosphatidylethanolamine (PE), forming N-acylphosphatidylethanolamine (NAPE), which serves as precursor for N-acylethanolamines (NAEs). This is Phospholipase A and acyltransferase 5 from Homo sapiens (Human).